The chain runs to 123 residues: Putative iron-sulfur cluster insertion protein ErpA (123 aa).

Positions 51, 115, and 117 each coordinate iron-sulfur cluster.

Belongs to the HesB/IscA family. As to quaternary structure, homodimer. Iron-sulfur cluster serves as cofactor.

Required for insertion of 4Fe-4S clusters. The protein is Putative iron-sulfur cluster insertion protein ErpA of Burkholderia lata (strain ATCC 17760 / DSM 23089 / LMG 22485 / NCIMB 9086 / R18194 / 383).